The sequence spans 454 residues: UDP-N-acetylmuramate--L-alanine ligase (454 aa).

113–119 (GSHGKTT) is a binding site for ATP.

This sequence belongs to the MurCDEF family.

The protein resides in the cytoplasm. The enzyme catalyses UDP-N-acetyl-alpha-D-muramate + L-alanine + ATP = UDP-N-acetyl-alpha-D-muramoyl-L-alanine + ADP + phosphate + H(+). It participates in cell wall biogenesis; peptidoglycan biosynthesis. Cell wall formation. This is UDP-N-acetylmuramate--L-alanine ligase from Aquifex aeolicus (strain VF5).